The sequence spans 447 residues: Phosphoglucosamine mutase (447 aa).

Catalysis depends on Ser-105, which acts as the Phosphoserine intermediate. Residues Ser-105, Asp-244, Asp-246, and Asp-248 each coordinate Mg(2+). Ser-105 carries the phosphoserine modification.

This sequence belongs to the phosphohexose mutase family. Requires Mg(2+) as cofactor. Post-translationally, activated by phosphorylation.

The catalysed reaction is alpha-D-glucosamine 1-phosphate = D-glucosamine 6-phosphate. Catalyzes the conversion of glucosamine-6-phosphate to glucosamine-1-phosphate. The protein is Phosphoglucosamine mutase of Polynucleobacter asymbioticus (strain DSM 18221 / CIP 109841 / QLW-P1DMWA-1) (Polynucleobacter necessarius subsp. asymbioticus).